A 287-amino-acid chain; its full sequence is tRNA selenocysteine 1-associated protein 1 (287 aa).

2 consecutive RRM domains span residues 3-86 and 96-175; these read ASLW…YATY and YSLF…VAIP.

Belongs to the RRM TRSPAP family. Component of the tRNA(Sec) complex composed at least of EEFSEC, SECISBP2, SEPHS1, SEPSECS, TRNAU1AP and tRNA(Sec). Associates with mRNP and/or polysomes. Found in a complex with tRNA(Sec). Interacts with SEPSECS. As to expression, ubiquitous.

It localises to the nucleus. The protein resides in the cytoplasm. Functionally, involved in the early steps of selenocysteine biosynthesis and tRNA(Sec) charging to the later steps resulting in the cotranslational incorporation of selenocysteine into selenoproteins. Stabilizes the SECISBP2, EEFSEC and tRNA(Sec) complex. May be involved in the methylation of tRNA(Sec). Enhances efficiency of selenoproteins synthesis. The protein is tRNA selenocysteine 1-associated protein 1 (Trnau1ap) of Rattus norvegicus (Rat).